Here is a 547-residue protein sequence, read N- to C-terminus: Chaperonin GroEL (547 aa).

ATP is bound by residues 30 to 33 (TLGP), K51, 87 to 91 (DGTTT), G415, and D496. Residues 528-547 (DKSDMPAMPPGGMGGMGGMY) form a disordered region. The segment covering 538-547 (GGMGGMGGMY) has biased composition (gly residues).

This sequence belongs to the chaperonin (HSP60) family. As to quaternary structure, forms a cylinder of 14 subunits composed of two heptameric rings stacked back-to-back. Interacts with the co-chaperonin GroES.

Its subcellular location is the cytoplasm. It carries out the reaction ATP + H2O + a folded polypeptide = ADP + phosphate + an unfolded polypeptide.. Functionally, together with its co-chaperonin GroES, plays an essential role in assisting protein folding. The GroEL-GroES system forms a nano-cage that allows encapsulation of the non-native substrate proteins and provides a physical environment optimized to promote and accelerate protein folding. The protein is Chaperonin GroEL of Chlorobium luteolum (strain DSM 273 / BCRC 81028 / 2530) (Pelodictyon luteolum).